A 1483-amino-acid chain; its full sequence is Heme-responsive zinc finger transcription factor HAP1 (1483 aa).

Residues 1–50 (MSNTPYNSSVPSIASMTQSSVSRSPNMHTATTPGANTSSNSPPLHMSSDS) are compositionally biased toward polar residues. Residues 1-56 (MSNTPYNSSVPSIASMTQSSVSRSPNMHTATTPGANTSSNSPPLHMSSDSSKIKRK) are disordered. Zn(2+) contacts are provided by C64, C67, C74, C81, C84, and C93. A DNA-binding region (zn(2)-C6 fungal-type) is located at residues 64-93 (CTICRKRKVKCDKLRPHCQQCTKTGVAHLC). Residues 105 to 134 (EKELLKDNELKKLRERVKSLEKTLSKVHSS) are a coiled coil. The segment at 126-208 (KTLSKVHSSP…ANSSSLSISN (83 aa)) is disordered. A compositionally biased stretch (low complexity) spans 130 to 142 (KVHSSPSSNSLKS). Composition is skewed to polar residues over residues 143 to 152 (YNTPESSNLF) and 160 to 176 (TLVN…SHMH). The span at 177-208 (QQQQQQQQQEQQQDFSRSANANANSSSLSISN) shows a compositional bias: low complexity. A heme-responsive; required for HMC formation region spans residues 244–444 (KGDPYLKLLW…NTIPHHQPQS (201 aa)). HRM repeat units follow at residues 280–285 (KCPINH), 299–304 (KCPVDH), 323–328 (KCPVDH), 347–352 (RCPVDH), 389–394 (KCPVDH), and 415–420 (RCPIDH). Polar residues-rich tracts occupy residues 432-447 (STHN…SGSH) and 706-734 (QLNA…NPTL). Disordered regions lie at residues 432 to 458 (STHN…NRKH) and 706 to 767 (QLNA…KENQ). Residues 735–759 (NNNMSAATTNSSSRSGSADSRSGSN) show a composition bias toward low complexity. The HRM 7 repeat unit spans residues 1192 to 1197 (KCPVYQ).

Binds DNA as a homodimer. Interacts with SRO9 and YDJ1. In the absence of heme, binds to at least four cellular proteins, including YDJ1 and SRO9, forming a high-molecular-weight complex (HMC) which results in repression of its activity and dictates its DNA-binding specificity.

Its subcellular location is the nucleus. Functionally, regulation of oxygen dependent gene expression. It modulates the expression of Iso-1 (CYP1) and Iso-2 (CYP3) cytochrome c. In response to heme, promotes transcription of genes encoding functions required for respiration, controlling oxidative damage and repression of anaerobic genes. Binds to the sequence 5'-CGGNNNTNNCGG-3'. This chain is Heme-responsive zinc finger transcription factor HAP1 (HAP1), found in Saccharomyces cerevisiae (strain Lalvin EC1118 / Prise de mousse) (Baker's yeast).